The primary structure comprises 199 residues: Holliday junction branch migration complex subunit RuvA (199 aa).

The segment at 1-63 (MIAYIEGKLA…EDAHTLFGFA (63 aa)) is domain I. Residues 64 to 142 (DLMEKEMFLH…KDALLAGSDS (79 aa)) form a domain II region. Residues 143 to 151 (KQNFSVSHN) form a flexible linker region. The tract at residues 151-199 (NSIRSEALTALITLGFTKTVAEKNLDLILKGNSNSFTLEDLIKQALKMS) is domain III.

Belongs to the RuvA family. In terms of assembly, homotetramer. Forms an RuvA(8)-RuvB(12)-Holliday junction (HJ) complex. HJ DNA is sandwiched between 2 RuvA tetramers; dsDNA enters through RuvA and exits via RuvB. An RuvB hexamer assembles on each DNA strand where it exits the tetramer. Each RuvB hexamer is contacted by two RuvA subunits (via domain III) on 2 adjacent RuvB subunits; this complex drives branch migration. In the full resolvosome a probable DNA-RuvA(4)-RuvB(12)-RuvC(2) complex forms which resolves the HJ.

The protein resides in the cytoplasm. Functionally, the RuvA-RuvB-RuvC complex processes Holliday junction (HJ) DNA during genetic recombination and DNA repair, while the RuvA-RuvB complex plays an important role in the rescue of blocked DNA replication forks via replication fork reversal (RFR). RuvA specifically binds to HJ cruciform DNA, conferring on it an open structure. The RuvB hexamer acts as an ATP-dependent pump, pulling dsDNA into and through the RuvAB complex. HJ branch migration allows RuvC to scan DNA until it finds its consensus sequence, where it cleaves and resolves the cruciform DNA. The polypeptide is Holliday junction branch migration complex subunit RuvA (Cytophaga hutchinsonii (strain ATCC 33406 / DSM 1761 / CIP 103989 / NBRC 15051 / NCIMB 9469 / D465)).